The following is a 355-amino-acid chain: Erythronate-4-phosphate dehydrogenase (355 aa).

Residues serine 45 and threonine 66 each coordinate substrate. Aspartate 146 lines the NAD(+) pocket. Arginine 206 is an active-site residue. Position 229 (aspartate 229) interacts with NAD(+). Glutamate 234 is an active-site residue. Catalysis depends on histidine 251, which acts as the Proton donor. NAD(+) is bound at residue glycine 254. Tyrosine 255 lines the substrate pocket.

Belongs to the D-isomer specific 2-hydroxyacid dehydrogenase family. PdxB subfamily. Homodimer.

It is found in the cytoplasm. The enzyme catalyses 4-phospho-D-erythronate + NAD(+) = (R)-3-hydroxy-2-oxo-4-phosphooxybutanoate + NADH + H(+). The protein operates within cofactor biosynthesis; pyridoxine 5'-phosphate biosynthesis; pyridoxine 5'-phosphate from D-erythrose 4-phosphate: step 2/5. In terms of biological role, catalyzes the oxidation of erythronate-4-phosphate to 3-hydroxy-2-oxo-4-phosphonooxybutanoate. This chain is Erythronate-4-phosphate dehydrogenase, found in Acinetobacter baumannii (strain SDF).